We begin with the raw amino-acid sequence, 220 residues long: Probable septum site-determining protein MinC (220 aa).

Belongs to the MinC family. Interacts with MinD and FtsZ.

Its function is as follows. Cell division inhibitor that blocks the formation of polar Z ring septums. Rapidly oscillates between the poles of the cell to destabilize FtsZ filaments that have formed before they mature into polar Z rings. Prevents FtsZ polymerization. In Photobacterium profundum (strain SS9), this protein is Probable septum site-determining protein MinC.